We begin with the raw amino-acid sequence, 858 residues long: Bifunctional uridylyltransferase/uridylyl-removing enzyme (858 aa).

The tract at residues 1–324 is uridylyltransferase; it reads MSASVAEPPP…PATSGVTRVL (324 aa). A uridylyl-removing region spans residues 325–681; it reads SPGRFVEKQG…ARPSPVGDAL (357 aa). One can recognise an HD domain in the interval 443–565; it reads VDQHILMVLR…VGSERRLTAL (123 aa). ACT domains lie at 682–761 and 790–858; these read QVLV…PEPS and ILSV…AIAV.

The protein belongs to the GlnD family. It depends on Mg(2+) as a cofactor.

The catalysed reaction is [protein-PII]-L-tyrosine + UTP = [protein-PII]-uridylyl-L-tyrosine + diphosphate. It carries out the reaction [protein-PII]-uridylyl-L-tyrosine + H2O = [protein-PII]-L-tyrosine + UMP + H(+). With respect to regulation, uridylyltransferase (UTase) activity is inhibited by glutamine, while glutamine activates uridylyl-removing (UR) activity. In terms of biological role, modifies, by uridylylation and deuridylylation, the PII regulatory proteins (GlnB and homologs), in response to the nitrogen status of the cell that GlnD senses through the glutamine level. Under low glutamine levels, catalyzes the conversion of the PII proteins and UTP to PII-UMP and PPi, while under higher glutamine levels, GlnD hydrolyzes PII-UMP to PII and UMP (deuridylylation). Thus, controls uridylylation state and activity of the PII proteins, and plays an important role in the regulation of nitrogen assimilation and metabolism. This chain is Bifunctional uridylyltransferase/uridylyl-removing enzyme, found in Burkholderia pseudomallei (strain K96243).